The following is a 224-amino-acid chain: Glutathione S-transferase U8 (224 aa).

The GST N-terminal domain maps to 5 to 85; that stretch reads EHVKLLGLWG…YIEDTWKTTH (81 aa). Residues 15 to 16, 42 to 43, 56 to 57, and 69 to 70 each bind glutathione; these read SP, NR, KV, and ES. The 123-residue stretch at 91 to 213 folds into the GST C-terminal domain; it reads DPYERAMARF…LPPKEKLVAV (123 aa). Thr152 bears the Phosphothreonine mark.

This sequence belongs to the GST superfamily. Tau family.

The protein localises to the cytoplasm. The protein resides in the cytosol. It catalyses the reaction RX + glutathione = an S-substituted glutathione + a halide anion + H(+). In terms of biological role, may be involved in the conjugation of reduced glutathione to a wide number of exogenous and endogenous hydrophobic electrophiles and have a detoxification role against certain herbicides. This is Glutathione S-transferase U8 (GSTU8) from Arabidopsis thaliana (Mouse-ear cress).